We begin with the raw amino-acid sequence, 317 residues long: Retinol dehydrogenase 16 (317 aa).

33-57 (FITGCDSGFGKLLARQLDARGLRVL) serves as a coordination point for NAD(+). Residue serine 164 coordinates substrate. Catalysis depends on tyrosine 176, which acts as the Proton acceptor. The chain crosses the membrane as a helical span at residues 289–309 (LLYLPMSYMPTFLVDAIMYWV).

This sequence belongs to the short-chain dehydrogenases/reductases (SDR) family. As to quaternary structure, homodimer. In terms of processing, not N-glycosylated. As to expression, highly expressed in adult liver (at protein level). Detected in endometrium, liver and foreskin. Detected in the spineous layers of adult skin, and at lower levels in basal and granular skin layers. Detected in fetal liver and lung.

It is found in the microsome membrane. It localises to the endoplasmic reticulum membrane. It catalyses the reaction all-trans-retinol--[retinol-binding protein] + NAD(+) = all-trans-retinal--[retinol-binding protein] + NADH + H(+). The enzyme catalyses all-trans-retinol + NAD(+) = all-trans-retinal + NADH + H(+). The catalysed reaction is 13-cis-retinol + NAD(+) = 13-cis-retinal + NADH + H(+). It carries out the reaction 11-cis-retinol + NAD(+) = 11-cis-retinal + NADH + H(+). It catalyses the reaction 9-cis-retinol + NAD(+) = 9-cis-retinal + NADH + H(+). The enzyme catalyses 5alpha-androstane-3alpha,17beta-diol + NAD(+) = 17beta-hydroxy-5alpha-androstan-3-one + NADH + H(+). The catalysed reaction is androsterone + NAD(+) = 5alpha-androstan-3,17-dione + NADH + H(+). It functions in the pathway cofactor metabolism; retinol metabolism. With respect to regulation, inhibited by citral, perillyl alcohol, geraniol, farnesol and geranyl geraniol. Oxidoreductase with a preference for NAD. Oxidizes all-trans-retinol, 9-cis-retinol, 11-cis-retinol and 13-cis-retinol to the corresponding aldehydes. Has higher activity towards CRBP-bound retinol than with free retinol. Also oxidizes 3-alpha-hydroxysteroids. Oxidizes androstanediol and androsterone to dihydrotestosterone and androstanedione. Can also catalyze the reverse reaction. This chain is Retinol dehydrogenase 16, found in Homo sapiens (Human).